Reading from the N-terminus, the 308-residue chain is Ornithine carbamoyltransferase (308 aa).

Residues 56 to 59, Gln83, Arg107, and 134 to 137 each bind carbamoyl phosphate; these read STRT and HPCQ. Residues Asn165, Asp225, and 229 to 230 contribute to the L-ornithine site; that span reads SM. Carbamoyl phosphate-binding positions include 266-267 and Arg294; that span reads CL.

The protein belongs to the aspartate/ornithine carbamoyltransferase superfamily. OTCase family.

Its subcellular location is the cytoplasm. The catalysed reaction is carbamoyl phosphate + L-ornithine = L-citrulline + phosphate + H(+). It functions in the pathway amino-acid degradation; L-arginine degradation via ADI pathway; carbamoyl phosphate from L-arginine: step 2/2. In terms of biological role, reversibly catalyzes the transfer of the carbamoyl group from carbamoyl phosphate (CP) to the N(epsilon) atom of ornithine (ORN) to produce L-citrulline. The chain is Ornithine carbamoyltransferase from Cereibacter sphaeroides (strain KD131 / KCTC 12085) (Rhodobacter sphaeroides).